Reading from the N-terminus, the 351-residue chain is Glycerol-3-phosphate dehydrogenase [NAD(P)+] (351 aa).

NADPH is bound by residues serine 18, tryptophan 19, arginine 38, and lysine 122. Sn-glycerol 3-phosphate contacts are provided by lysine 122, glycine 153, and serine 155. NADPH is bound at residue alanine 157. The sn-glycerol 3-phosphate site is built by lysine 208, aspartate 261, serine 271, arginine 272, and asparagine 273. Lysine 208 (proton acceptor) is an active-site residue. Arginine 272 is an NADPH binding site. Glutamate 297 is an NADPH binding site.

This sequence belongs to the NAD-dependent glycerol-3-phosphate dehydrogenase family.

It localises to the cytoplasm. It catalyses the reaction sn-glycerol 3-phosphate + NAD(+) = dihydroxyacetone phosphate + NADH + H(+). The catalysed reaction is sn-glycerol 3-phosphate + NADP(+) = dihydroxyacetone phosphate + NADPH + H(+). It participates in membrane lipid metabolism; glycerophospholipid metabolism. Catalyzes the reduction of the glycolytic intermediate dihydroxyacetone phosphate (DHAP) to sn-glycerol 3-phosphate (G3P), the key precursor for phospholipid synthesis. In Bordetella parapertussis (strain 12822 / ATCC BAA-587 / NCTC 13253), this protein is Glycerol-3-phosphate dehydrogenase [NAD(P)+].